Reading from the N-terminus, the 721-residue chain is Polyribonucleotide nucleotidyltransferase (721 aa).

2 residues coordinate Mg(2+): Asp-495 and Asp-501. The region spanning 562–621 is the KH domain; the sequence is PRLLSFRIDPELIGTVIGPGGRTIKNITERTNTKIDIEDSGIVTIASHDGAAAEEAQKII. The S1 motif domain occupies 631 to 699; the sequence is GEVFTGSITR…NRGRINLTLR (69 aa). Residues 700–721 form a disordered region; it reads GVPQSGESADSQPAPTPVAPLS.

Belongs to the polyribonucleotide nucleotidyltransferase family. Mg(2+) serves as cofactor.

The protein localises to the cytoplasm. It carries out the reaction RNA(n+1) + phosphate = RNA(n) + a ribonucleoside 5'-diphosphate. In terms of biological role, involved in mRNA degradation. Catalyzes the phosphorolysis of single-stranded polyribonucleotides processively in the 3'- to 5'-direction. This is Polyribonucleotide nucleotidyltransferase from Synechococcus sp. (strain CC9311).